The sequence spans 671 residues: Vinexin (671 aa).

The residue at position 2 (Q2) is an N-acetylalanine. R6 carries the phosphoserine modification. Disordered regions lie at residues 46-111 (LNFQ…TKDS), 166-215 (TFEE…RPGA), 249-268 (LETG…EKPS), 295-324 (TRLP…AWSS), and 337-383 (SLSP…KKRK). The span at 88 to 108 (PSASTKIPASQHTQNWSATWT) shows a compositional bias: polar residues. The SoHo domain occupies 115–187 (DKRWVKYEGI…GAQQRPAHRP (73 aa)). S348 is modified (phosphoserine). The span at 359 to 368 (PSSTRDPSAS) shows a compositional bias: polar residues. SH3 domains lie at 380–439 (KKRK…VLPA) and 454–515 (LEYG…VSRE). The interval 380 to 515 (KKRKAARLKF…PASYVQVSRE (136 aa)) is binds to vinculin. S395 bears the Phosphoserine mark. Positions 519–611 (RLCDDGPQLP…LGTSSPNTSQ (93 aa)) are disordered. A Phosphoserine; by MAPK1 modification is found at S530. The span at 535–553 (AAARSARHPSSPSALRSPA) shows a compositional bias: low complexity. A phosphoserine mark is found at S544, S545, S547, S551, and S563. Residues 560 to 584 (GQTSPRRTGFSFPTQEPRPQTQNLG) show a composition bias toward polar residues. An SH3 3 domain is found at 612–671 (IHWTPYRAMYQYRPQNEDELELREGDRVDVMQQCDDGWFVGVSRRTQKFGTFPGNYVAPV). The binds to SOS stretch occupies residues 612–671 (IHWTPYRAMYQYRPQNEDELELREGDRVDVMQQCDDGWFVGVSRRTQKFGTFPGNYVAPV).

As to quaternary structure, interacts with DLG5 through its third SH3 domain. Interacts with vinculin by the first two SH3 domains and the proline rich region of vinculin. Binds to SOS (guanine nucleotide exchange factor of RAS and RAC), through its third SH3 domain. The formation of this complex is down-regulated by phosphorylation of SOS. Interacts with INPPL1/SHIP2, SAFB2, SOCS7 and SRCIN1. Interacts with FASLG. Interacts with MAPK1/ERK2. Phosphorylated at Ser-530 by MAPK1/ERK2 during cell spreading. In terms of tissue distribution, both isoforms are expressed in different tissues like heart, placenta, brain, skeletal muscle and pancreas. Isoform beta is especially found in liver.

The protein resides in the cell junction. It is found in the cytoplasm. The protein localises to the cytoskeleton. Its subcellular location is the nucleus. In terms of biological role, vinexin alpha isoform promotes up-regulation of actin stress fiber formation. Vinexin beta isoform plays a role in cell spreading and enhances the activation of JNK/SAPK in response to EGF stimulation by using its third SH3 domain. The polypeptide is Vinexin (SORBS3) (Homo sapiens (Human)).